Reading from the N-terminus, the 585-residue chain is Arginine--tRNA ligase (585 aa).

A 'HIGH' region motif is present at residues 126-136 (PNIAKEMHVGH).

Belongs to the class-I aminoacyl-tRNA synthetase family. In terms of assembly, monomer.

The protein resides in the cytoplasm. The enzyme catalyses tRNA(Arg) + L-arginine + ATP = L-arginyl-tRNA(Arg) + AMP + diphosphate. This Cyanothece sp. (strain PCC 7425 / ATCC 29141) protein is Arginine--tRNA ligase.